A 173-amino-acid chain; its full sequence is uncharacterized protein (173 aa).

Residues Met-1–Lys-11 are compositionally biased toward basic and acidic residues. Residues Met-1–Tyr-173 form a disordered region. Over residues Phe-17–Ile-41 the composition is skewed to polar residues. Composition is skewed to basic and acidic residues over residues Lys-56–Asn-109 and Ala-120–Lys-144. Residues Lys-145 to Lys-156 are compositionally biased toward basic residues. Basic and acidic residues predominate over residues Asn-157–Tyr-173.

This is an uncharacterized protein from Caenorhabditis elegans.